The primary structure comprises 492 residues: Protein KOKOPELLI (492 aa).

2 disordered regions span residues 218–354 (VTSP…RNVM) and 394–426 (SKFHHKHQEKSKERKRPMSESKGLTTHKQQHQG). The span at 256–270 (QETETFDDDSSETEA) shows a compositional bias: acidic residues. Positions 287–305 (STSQEYSGETGSSSGSEWE) are enriched in low complexity. Positions 317 to 336 (ESSYPPQNDDSVSEVSTSPP) are enriched in polar residues. Composition is skewed to basic and acidic residues over residues 337 to 348 (HTDRDTSREPGK) and 403 to 412 (KSKERKRPMS).

In terms of tissue distribution, mostly expressed in pollen and open flowers and, to a lower extent, in closed flowers.

Functionally, positively regulates reproductive function by facilitating male gametophyte formation and double fertilization. The chain is Protein KOKOPELLI from Arabidopsis thaliana (Mouse-ear cress).